The chain runs to 309 residues: Homoserine O-succinyltransferase (309 aa).

The Acyl-thioester intermediate role is filled by Cys142. Substrate contacts are provided by Lys163 and Ser192. The active-site Proton acceptor is His235. Residue Glu237 is part of the active site. Substrate is bound at residue Arg249.

The protein belongs to the MetA family. As to quaternary structure, homodimer.

It localises to the cytoplasm. The catalysed reaction is L-homoserine + succinyl-CoA = O-succinyl-L-homoserine + CoA. It functions in the pathway amino-acid biosynthesis; L-methionine biosynthesis via de novo pathway; O-succinyl-L-homoserine from L-homoserine: step 1/1. Functionally, transfers a succinyl group from succinyl-CoA to L-homoserine, forming succinyl-L-homoserine. The chain is Homoserine O-succinyltransferase from Escherichia coli O157:H7.